The following is a 274-amino-acid chain: Rhamnulose-1-phosphate aldolase (274 aa).

Glu-117 is an active-site residue. Residues His-141, His-143, and His-212 each coordinate Zn(2+).

This sequence belongs to the aldolase class II family. RhaD subfamily. Homotetramer. Requires Zn(2+) as cofactor.

The protein resides in the cytoplasm. It catalyses the reaction L-rhamnulose 1-phosphate = (S)-lactaldehyde + dihydroxyacetone phosphate. The protein operates within carbohydrate degradation; L-rhamnose degradation; glycerone phosphate from L-rhamnose: step 3/3. Functionally, catalyzes the reversible cleavage of L-rhamnulose-1-phosphate to dihydroxyacetone phosphate (DHAP) and L-lactaldehyde. In Pectobacterium carotovorum subsp. carotovorum (strain PC1), this protein is Rhamnulose-1-phosphate aldolase.